The chain runs to 314 residues: MAFQEDGNHTAVTEFVLFGLTDDPVLRVILFIIFLCIYLVTVSGNLSTILLIRVSSQLHHPMYFFLSHLAFADIGYSSSVTPNMLVNFLVERHTISYIGCAIQLGSVVFFGSSECFILAAMAYDRFMAICNPLLYSTKMSTQVCVQLLLIAYIGGFLNTWSFTICFYSLVFCGPNGVNHFFCDFAPLIELSCSDVSVPATVPSFTAGSIIVVTVIVIAISYIYILITILKMHSTEGRQKAFSTCTSHLTAVTLFYGTITFIYVMPKSSFSTDQNKVVSVFYMVVIPMLNPLIYSLRNNEIKGALKRQIGRKIFS.

Residues 1-28 (MAFQEDGNHTAVTEFVLFGLTDDPVLRV) lie on the Extracellular side of the membrane. An N-linked (GlcNAc...) asparagine glycan is attached at N8. A helical transmembrane segment spans residues 29–49 (ILFIIFLCIYLVTVSGNLSTI). Residues 50 to 57 (LLIRVSSQ) lie on the Cytoplasmic side of the membrane. Residues 58–78 (LHHPMYFFLSHLAFADIGYSS) traverse the membrane as a helical segment. Topologically, residues 79 to 102 (SVTPNMLVNFLVERHTISYIGCAI) are extracellular. C100 and C192 form a disulfide bridge. Residues 103–123 (QLGSVVFFGSSECFILAAMAY) traverse the membrane as a helical segment. Over 124 to 136 (DRFMAICNPLLYS) the chain is Cytoplasmic. The chain crosses the membrane as a helical span at residues 137 to 157 (TKMSTQVCVQLLLIAYIGGFL). The Extracellular segment spans residues 158–199 (NTWSFTICFYSLVFCGPNGVNHFFCDFAPLIELSCSDVSVPA). Residues 200–220 (TVPSFTAGSIIVVTVIVIAIS) form a helical membrane-spanning segment. The Cytoplasmic portion of the chain corresponds to 221 to 240 (YIYILITILKMHSTEGRQKA). Residues 241 to 261 (FSTCTSHLTAVTLFYGTITFI) form a helical membrane-spanning segment. Residues 262 to 274 (YVMPKSSFSTDQN) lie on the Extracellular side of the membrane. The helical transmembrane segment at 275–295 (KVVSVFYMVVIPMLNPLIYSL) threads the bilayer. Residues 296 to 314 (RNNEIKGALKRQIGRKIFS) lie on the Cytoplasmic side of the membrane.

This sequence belongs to the G-protein coupled receptor 1 family.

It localises to the cell membrane. Potential odorant receptor. The protein is Olfactory receptor 5P6 of Mus musculus (Mouse).